A 663-amino-acid polypeptide reads, in one-letter code: Protein MICRORCHIDIA 6 (663 aa).

A disordered region spans residues 1-77; that stretch reads MSHDRSVNVS…PADDAGVTSS (77 aa). Residues 49–62 show a composition bias toward polar residues; it reads SVGQSAGQSSTSVV. Residues 552 to 559 carry the Nuclear localization signal motif; the sequence is KRKEHPDS. A coiled-coil region spans residues 614–659; the sequence is DRKVRSQNLEVKAMNLRSELENYKSEYERLMVELQALDLVKDEHRR.

The protein belongs to the MORC ATPase protein family. Homodimer and heterodimers with MORC1/CRT1 and MORC2. Interacts directly with SUVH9. Component of an RNA-directed DNA methylation (RdDM) complex that contains at least MORC6, MORC1/CRT1, MORC2, SWI3D and SUVH9. Stimulated by interaction with DMS3. Interacts with IDN2, SWI3B, SWI3C and SWI3D. Mg(2+) serves as cofactor. The cofactor is Mn(2+).

The protein localises to the nucleus. With respect to regulation, stimulated by DMS3. In terms of biological role, involved in RNA-directed DNA methylation (RdDM) as a component of the RdDM machinery and required for gene silencing. Together with SUVH2 and SUVH9, regulates the silencing of some transposable elements (TEs). Exhibits ATPase activity. May also be involved in the regulation of chromatin architecture/condensation to maintain gene silencing. Binds DNA/RNA in a non-specific manner and exhibits endonuclease activity. Probably involved in DNA repair. Positive regulator of defense against the oomycete Hyaloperonospora arabidopsidis (Hpa). This chain is Protein MICRORCHIDIA 6, found in Arabidopsis thaliana (Mouse-ear cress).